Reading from the N-terminus, the 45-residue chain is DQPVERHAGNKRHLNPTIRRAMIIDANRREKCCEVGWCDSGCECC.

The propeptide occupies 1–31 (DQPVERHAGNKRHLNPTIRRAMIIDANRREK). 3 disulfide bridges follow: Cys32–Cys44, Cys33–Cys42, and Cys38–Cys45.

Belongs to the conotoxin M superfamily. In terms of tissue distribution, expressed by the venom duct.

Its subcellular location is the secreted. The polypeptide is Conotoxin reg3.12 (Conus regius (Crown cone)).